We begin with the raw amino-acid sequence, 523 residues long: Glutamate--cysteine ligase, chloroplastic (523 aa).

An intrachain disulfide couples C187 to C407.

The protein belongs to the carboxylate-amine ligase family. Glutamate--cysteine ligase type 2 subfamily. In terms of assembly, homodimer or monomer when oxidized or reduced, respectively. The Cys-187-Cys-407 disulfide bridge is known to modulate the enzyme activity according to the redox status. The oxidized form constitutes the active enzyme.

The protein localises to the plastid. It localises to the chloroplast. It carries out the reaction L-cysteine + L-glutamate + ATP = gamma-L-glutamyl-L-cysteine + ADP + phosphate + H(+). The protein operates within sulfur metabolism; glutathione biosynthesis; glutathione from L-cysteine and L-glutamate: step 1/2. The polypeptide is Glutamate--cysteine ligase, chloroplastic (GSH1) (Solanum lycopersicum (Tomato)).